The chain runs to 315 residues: Tyrosine--tRNA ligase (315 aa).

Tyr32 contacts L-tyrosine. The short motif at 37–45 is the 'HIGH' region element; sequence PSGEIHLGH. L-tyrosine is bound by residues Tyr152, Gln156, Asp159, and Gln174. A 'KMSKS' region motif is present at residues 208–212; it reads KMSSS. ATP is bound at residue Ser211.

It belongs to the class-I aminoacyl-tRNA synthetase family. TyrS type 3 subfamily. As to quaternary structure, homodimer.

It is found in the cytoplasm. It catalyses the reaction tRNA(Tyr) + L-tyrosine + ATP = L-tyrosyl-tRNA(Tyr) + AMP + diphosphate + H(+). In terms of biological role, catalyzes the attachment of tyrosine to tRNA(Tyr) in a two-step reaction: tyrosine is first activated by ATP to form Tyr-AMP and then transferred to the acceptor end of tRNA(Tyr). The sequence is that of Tyrosine--tRNA ligase from Methanoculleus marisnigri (strain ATCC 35101 / DSM 1498 / JR1).